Reading from the N-terminus, the 118-residue chain is Acetylcholine receptor subunit beta (118 aa).

Residues 1–15 form the signal peptide; the sequence is APTVALLLLCALCSA.

Belongs to the ligand-gated ion channel (TC 1.A.9) family. Acetylcholine receptor (TC 1.A.9.1) subfamily. Beta-1/CHRNB1 sub-subfamily. Pentamer of two alpha chains, and one each of the beta, delta, and gamma chains.

The protein resides in the postsynaptic cell membrane. The protein localises to the cell membrane. It carries out the reaction K(+)(in) = K(+)(out). The enzyme catalyses Na(+)(in) = Na(+)(out). Functionally, after binding acetylcholine, the AChR responds by an extensive change in conformation that affects all subunits and leads to opening of an ion-conducting channel across the plasma membrane. The chain is Acetylcholine receptor subunit beta (CHRNB1) from Gallus gallus (Chicken).